The chain runs to 80 residues: Large ribosomal subunit protein uL24 (80 aa).

The protein belongs to the universal ribosomal protein uL24 family. Part of the 50S ribosomal subunit.

Its function is as follows. One of two assembly initiator proteins, it binds directly to the 5'-end of the 23S rRNA, where it nucleates assembly of the 50S subunit. Functionally, one of the proteins that surrounds the polypeptide exit tunnel on the outside of the subunit. The chain is Large ribosomal subunit protein uL24 from Chlorobaculum tepidum (strain ATCC 49652 / DSM 12025 / NBRC 103806 / TLS) (Chlorobium tepidum).